Here is a 210-residue protein sequence, read N- to C-terminus: Urease accessory protein UreG (210 aa).

15–22 (GPVGSGKT) contributes to the GTP binding site.

It belongs to the SIMIBI class G3E GTPase family. UreG subfamily. In terms of assembly, homodimer. UreD, UreF and UreG form a complex that acts as a GTP-hydrolysis-dependent molecular chaperone, activating the urease apoprotein by helping to assemble the nickel containing metallocenter of UreC. The UreE protein probably delivers the nickel.

Its subcellular location is the cytoplasm. Functionally, facilitates the functional incorporation of the urease nickel metallocenter. This process requires GTP hydrolysis, probably effectuated by UreG. This chain is Urease accessory protein UreG, found in Ralstonia nicotianae (strain ATCC BAA-1114 / GMI1000) (Ralstonia solanacearum).